Reading from the N-terminus, the 211-residue chain is MNASANLCAASANDPQPGDQEAAHPVACAGDEPAAFLPHDLPIFLVGMMGAGKTTIGRGLARALRREFIDLDHELEARCGVRVPVIFEIEGEAGFRRREAAALQECTQRRQIILATGGGAVLAAENRQALRERGIVIYLRASVEELFRRTSRDRNRPLLATADPRATLRELMVAREPLYNEVADLVIDTGSMPIATLVKSLLPKLQAYEKK.

Positions 1–13 (MNASANLCAASAN) are enriched in low complexity. The disordered stretch occupies residues 1-24 (MNASANLCAASANDPQPGDQEAAH). Residue 50–55 (GAGKTT) participates in ATP binding. Threonine 54 is a Mg(2+) binding site. Residues aspartate 72, arginine 96, and glycine 118 each coordinate substrate. Arginine 156 is a binding site for ATP. Residue arginine 175 participates in substrate binding.

The protein belongs to the shikimate kinase family. Monomer. The cofactor is Mg(2+).

Its subcellular location is the cytoplasm. It catalyses the reaction shikimate + ATP = 3-phosphoshikimate + ADP + H(+). The protein operates within metabolic intermediate biosynthesis; chorismate biosynthesis; chorismate from D-erythrose 4-phosphate and phosphoenolpyruvate: step 5/7. Catalyzes the specific phosphorylation of the 3-hydroxyl group of shikimic acid using ATP as a cosubstrate. The protein is Shikimate kinase of Bordetella parapertussis (strain 12822 / ATCC BAA-587 / NCTC 13253).